The primary structure comprises 89 residues: Small ribosomal subunit protein uS15 (89 aa).

Belongs to the universal ribosomal protein uS15 family. As to quaternary structure, part of the 30S ribosomal subunit. Forms a bridge to the 50S subunit in the 70S ribosome, contacting the 23S rRNA.

Functionally, one of the primary rRNA binding proteins, it binds directly to 16S rRNA where it helps nucleate assembly of the platform of the 30S subunit by binding and bridging several RNA helices of the 16S rRNA. In terms of biological role, forms an intersubunit bridge (bridge B4) with the 23S rRNA of the 50S subunit in the ribosome. In Pelodictyon phaeoclathratiforme (strain DSM 5477 / BU-1), this protein is Small ribosomal subunit protein uS15.